A 427-amino-acid chain; its full sequence is MNRAGNIEKAFELAREEYQAIGVDVDSALQRMRDVEISVHCWQGDDVKGFEGDDGALGNGLAVTGNYPGRARTIDELQSDLELAYSLIPGNHRLNLHALYGEFKGRVDRDEIEVEHFQGWIDWARDQKVRLDFNPSYFSHPNAADGFTLAHADSGIRQFWIDHGIACRKIAAAMGAAQSNPCINNFWVPDGYKDVPADRKAPRERLADSLDSIFATEYPAEQTLDAVECKLFGIGSESYVVGSHEFYMGYAMSRYKVLCLDAGHFHPTETISDKISAVMMYVPELLLHVSRGVRWDSDHVVTYSDELQSIMQEVVRGDYLGRVHIGLDFFDASINRVAAWAIGTRNALKAVLAALLEPTEQLRKMELEGDLTGRLALLEEQKTLPLGAVWNHYCQSVDVPAGSDWLENVRQYESQVLSQRSDSSALV.

Residues His-264, Asp-296, and Asp-298 each contribute to the Mn(2+) site.

Belongs to the rhamnose isomerase family. The cofactor is Mn(2+).

The protein resides in the cytoplasm. The catalysed reaction is L-rhamnopyranose = L-rhamnulose. It functions in the pathway carbohydrate degradation; L-rhamnose degradation; glycerone phosphate from L-rhamnose: step 1/3. Its function is as follows. Catalyzes the interconversion of L-rhamnose and L-rhamnulose. This is L-rhamnose isomerase from Rhodopirellula baltica (strain DSM 10527 / NCIMB 13988 / SH1).